We begin with the raw amino-acid sequence, 269 residues long: Small ribosomal subunit protein uS2 (269 aa).

Belongs to the universal ribosomal protein uS2 family.

The protein is Small ribosomal subunit protein uS2 (rpsB) of Synechocystis sp. (strain ATCC 27184 / PCC 6803 / Kazusa).